The primary structure comprises 423 residues: Putative galacturan 1,4-alpha-galacturonidase C (423 aa).

Positions methionine 1–alanine 20 are cleaved as a signal peptide. 6 N-linked (GlcNAc...) asparagine glycosylation sites follow: asparagine 92, asparagine 98, asparagine 118, asparagine 156, asparagine 179, and asparagine 191. PbH1 repeat units follow at residues alanine 215–proline 236 and serine 238–serine 258. Aspartate 229 (proton donor) is an active-site residue. Cysteine 231 and cysteine 248 are joined by a disulfide. 3 N-linked (GlcNAc...) asparagine glycosylation sites follow: asparagine 245, asparagine 344, and asparagine 362. An intrachain disulfide couples cysteine 379 to cysteine 385. Asparagine 400 is a glycosylation site (N-linked (GlcNAc...) asparagine).

It belongs to the glycosyl hydrolase 28 family.

The protein localises to the secreted. The enzyme catalyses [(1-&gt;4)-alpha-D-galacturonosyl](n) + H2O = alpha-D-galacturonate + [(1-&gt;4)-alpha-D-galacturonosyl](n-1). Specific in hydrolyzing the terminal glycosidic bond of polygalacturonic acid and oligogalacturonates. This Aspergillus niger (strain ATCC MYA-4892 / CBS 513.88 / FGSC A1513) protein is Putative galacturan 1,4-alpha-galacturonidase C (rgxC).